The primary structure comprises 335 residues: Glycerol-3-phosphate dehydrogenase [NAD(P)+] (335 aa).

NADPH contacts are provided by Trp12 and Lys106. Positions 106, 136, and 138 each coordinate sn-glycerol 3-phosphate. Ala140 contacts NADPH. 5 residues coordinate sn-glycerol 3-phosphate: Lys191, Asp244, Ser254, Arg255, and Asn256. Lys191 (proton acceptor) is an active-site residue. Arg255 contacts NADPH. Val279 and Glu281 together coordinate NADPH.

This sequence belongs to the NAD-dependent glycerol-3-phosphate dehydrogenase family.

It localises to the cytoplasm. The enzyme catalyses sn-glycerol 3-phosphate + NAD(+) = dihydroxyacetone phosphate + NADH + H(+). It carries out the reaction sn-glycerol 3-phosphate + NADP(+) = dihydroxyacetone phosphate + NADPH + H(+). It functions in the pathway membrane lipid metabolism; glycerophospholipid metabolism. Catalyzes the reduction of the glycolytic intermediate dihydroxyacetone phosphate (DHAP) to sn-glycerol 3-phosphate (G3P), the key precursor for phospholipid synthesis. In Fusobacterium nucleatum subsp. nucleatum (strain ATCC 25586 / DSM 15643 / BCRC 10681 / CIP 101130 / JCM 8532 / KCTC 2640 / LMG 13131 / VPI 4355), this protein is Glycerol-3-phosphate dehydrogenase [NAD(P)+].